The primary structure comprises 225 residues: C-type lectin domain-containing protein 91 (225 aa).

An N-terminal signal peptide occupies residues 1 to 21; that stretch reads MRSTYILIIVPLIIIGGGVVA. The C-type lectin domain maps to 85-215; sequence YSDSCYFIET…CTMAFKSICE (131 aa). 2 disulfide bridges follow: Cys-106/Cys-214 and Cys-185/Cys-206. Asn-217 carries an N-linked (GlcNAc...) asparagine glycan.

Its subcellular location is the secreted. This is C-type lectin domain-containing protein 91 (clec-91) from Caenorhabditis elegans.